The following is a 399-amino-acid chain: Tryptophan synthase beta chain (399 aa).

N6-(pyridoxal phosphate)lysine is present on lysine 90.

This sequence belongs to the TrpB family. In terms of assembly, tetramer of two alpha and two beta chains. It depends on pyridoxal 5'-phosphate as a cofactor.

The enzyme catalyses (1S,2R)-1-C-(indol-3-yl)glycerol 3-phosphate + L-serine = D-glyceraldehyde 3-phosphate + L-tryptophan + H2O. It participates in amino-acid biosynthesis; L-tryptophan biosynthesis; L-tryptophan from chorismate: step 5/5. In terms of biological role, the beta subunit is responsible for the synthesis of L-tryptophan from indole and L-serine. The polypeptide is Tryptophan synthase beta chain (Lactiplantibacillus plantarum (strain ATCC BAA-793 / NCIMB 8826 / WCFS1) (Lactobacillus plantarum)).